A 201-amino-acid chain; its full sequence is Urease accessory protein UreG (201 aa).

11–18 (GPVGSGKT) lines the GTP pocket.

Belongs to the SIMIBI class G3E GTPase family. UreG subfamily. Homodimer. UreD, UreF and UreG form a complex that acts as a GTP-hydrolysis-dependent molecular chaperone, activating the urease apoprotein by helping to assemble the nickel containing metallocenter of UreC. The UreE protein probably delivers the nickel.

The protein resides in the cytoplasm. Its function is as follows. Facilitates the functional incorporation of the urease nickel metallocenter. This process requires GTP hydrolysis, probably effectuated by UreG. This is Urease accessory protein UreG from Prochlorococcus marinus subsp. pastoris (strain CCMP1986 / NIES-2087 / MED4).